The following is a 914-amino-acid chain: Inter-alpha-trypsin inhibitor heavy chain H1 (914 aa).

The first 30 residues, 1-30, serve as a signal peptide directing secretion; the sequence is MDGAAVGLRVLLGLGLVSLLTLEAMPAAWG. A propeptide spanning residues 31–36 is cleaved from the precursor; sequence LATTGR. The VIT domain maps to 39 to 168; the sequence is AREKRQAVDT…KATFQLTYEE (130 aa). S-linked (Hex...) cysteine glycosylation occurs at cysteine 62. Phosphoserine is present on serine 131. Residues asparagine 288 and asparagine 291 are each glycosylated (N-linked (GlcNAc...) asparagine). In terms of domain architecture, VWFA spans 293–453; it reads SKNLVFVIDI…FNFLEVMSME (161 aa). Phosphothreonine occurs at positions 405 and 410. An N-linked (GlcNAc...) asparagine glycan is attached at asparagine 591. Threonine 656 carries an O-linked (GalNAc...) threonine glycan. The residue at position 675 (aspartate 675) is an Aspartate 1-(chondroitin 4-sulfate)-ester. Positions 676-914 are excised as a propeptide; it reads PHFIIYVPQK…HTDYIVPDIF (239 aa).

Belongs to the ITIH family. I-alpha-I plasma protease inhibitors are assembled from one or two heavy chains (HC) and one light chain, bikunin. Inter-alpha-inhibitor (I-alpha-I) is composed of ITIH1/HC1, ITIH2/HC2 and bikunin. Interacts with TNFAIP6 (via Link and CUB domains). Heavy chains are linked to bikunin via chondroitin 4-sulfate esterified to the alpha-carboxyl of the C-terminal aspartate after propeptide cleavage. In terms of processing, the S-linked glycan is composed of two 6-carbon sugars, possibly Glc or Gal.

The protein localises to the secreted. May act as a carrier of hyaluronan in serum or as a binding protein between hyaluronan and other matrix protein, including those on cell surfaces in tissues to regulate the localization, synthesis and degradation of hyaluronan which are essential to cells undergoing biological processes. This chain is Inter-alpha-trypsin inhibitor heavy chain H1 (ITIH1), found in Mesocricetus auratus (Golden hamster).